The sequence spans 68 residues: Urocalcin (68 aa).

An N-terminal signal peptide occupies residues 1-27 (MKASTLVVIFIVIFITISSFSIHDVQA). Positions 28-35 (SGVEKREQ) are excised as a propeptide. 3 disulfides stabilise this stretch: Cys-38-Cys-52, Cys-45-Cys-56, and Cys-51-Cys-67. An essential for stimulation of [3H]ryanodine binding to RYR1 region spans residues 57–59 (KRR).

The protein belongs to the scorpion calcin family. Expressed by the venom gland.

Its subcellular location is the secreted. This toxin only weakly stabilizes ryanodine receptor 1 (RyR1) opening in a long-lasting subconductance state (55% of the full conductance state obtained only at high concentrations (1 uM)). In addition, it has been shown to dose-dependently stimulate ryanodine binding to RyR1 with the lowest activity of all calcins (EC(50)=376 nM). It also augments the bell-shaped calcium-[3H]ryanodine binding curve that is maximal at about 10 uM calcium concentration. It binds a different site as ryanodine. It acts synergistically with caffeine. In contrast to other calcins, it does not trigger calcium release from sarcoplasmic vesicles even at high concentration (1 uM). In vivo, intracerebroventricular injection into mice induces neurotoxic symptoms, followed by death. In Urodacus yaschenkoi (Inland robust scorpion), this protein is Urocalcin.